We begin with the raw amino-acid sequence, 131 residues long: Small ribosomal subunit protein uS8 (131 aa).

It belongs to the universal ribosomal protein uS8 family. In terms of assembly, part of the 30S ribosomal subunit. Contacts proteins S5 and S12.

In terms of biological role, one of the primary rRNA binding proteins, it binds directly to 16S rRNA central domain where it helps coordinate assembly of the platform of the 30S subunit. This Verminephrobacter eiseniae (strain EF01-2) protein is Small ribosomal subunit protein uS8.